A 509-amino-acid chain; its full sequence is ATP synthase subunit alpha, mitochondrial (509 aa).

Glycine 171 to threonine 178 provides a ligand contact to ATP.

It belongs to the ATPase alpha/beta chains family. In terms of assembly, F-type ATPases have 2 components, CF(1) - the catalytic core - and CF(0) - the membrane proton channel. CF(1) has five subunits: alpha(3), beta(3), gamma(1), delta(1), epsilon(1). CF(0) has three main subunits: a, b and c.

The protein localises to the mitochondrion. The protein resides in the mitochondrion inner membrane. Its function is as follows. Mitochondrial membrane ATP synthase (F(1)F(0) ATP synthase or Complex V) produces ATP from ADP in the presence of a proton gradient across the membrane which is generated by electron transport complexes of the respiratory chain. F-type ATPases consist of two structural domains, F(1) - containing the extramembraneous catalytic core, and F(0) - containing the membrane proton channel, linked together by a central stalk and a peripheral stalk. During catalysis, ATP synthesis in the catalytic domain of F(1) is coupled via a rotary mechanism of the central stalk subunits to proton translocation. Subunits alpha and beta form the catalytic core in F(1). Rotation of the central stalk against the surrounding alpha(3)beta(3) subunits leads to hydrolysis of ATP in three separate catalytic sites on the beta subunits. Subunit alpha does not bear the catalytic high-affinity ATP-binding sites. The sequence is that of ATP synthase subunit alpha, mitochondrial (ATPA) from Triticum aestivum (Wheat).